Reading from the N-terminus, the 574-residue chain is Amino-acid acetyltransferase, mitochondrial (574 aa).

The N-terminal 13 residues, 1-13 (MWRRIFAHELKYD), are a transit peptide targeting the mitochondrion. An N-acetyltransferase domain is found at 392 to 560 (KGAKPSSNSP…KRLREFMRSV (169 aa)).

The protein belongs to the acetyltransferase family. Interacts with the acetylglutamate kinase chain of AGR5,6.

The protein resides in the mitochondrion. The catalysed reaction is L-glutamate + acetyl-CoA = N-acetyl-L-glutamate + CoA + H(+). The protein operates within amino-acid biosynthesis; L-arginine biosynthesis; N(2)-acetyl-L-ornithine from L-glutamate: step 1/4. Feedback inhibition by L-arginine. Functionally, N-acetylglutamate synthase involved in arginine biosynthesis. The chain is Amino-acid acetyltransferase, mitochondrial (ARG2) from Saccharomyces cerevisiae (strain RM11-1a) (Baker's yeast).